Consider the following 71-residue polypeptide: Pro-MCH (71 aa).

Positions 1 to 20 are cleaved as a signal peptide; that stretch reads AKMNLSSYILILTFSLFSQG.

This sequence belongs to the melanin-concentrating hormone family.

It is found in the secreted. The chain is Pro-MCH (PMCH) from Pan paniscus (Pygmy chimpanzee).